Consider the following 417-residue polypeptide: Tol-Pal system protein TolB (417 aa).

A signal peptide spans 1–16 (MKYLWLFLIYAIGLFA).

Belongs to the TolB family. In terms of assembly, the Tol-Pal system is composed of five core proteins: the inner membrane proteins TolA, TolQ and TolR, the periplasmic protein TolB and the outer membrane protein Pal. They form a network linking the inner and outer membranes and the peptidoglycan layer.

The protein resides in the periplasm. Functionally, part of the Tol-Pal system, which plays a role in outer membrane invagination during cell division and is important for maintaining outer membrane integrity. The chain is Tol-Pal system protein TolB from Helicobacter pylori (strain J99 / ATCC 700824) (Campylobacter pylori J99).